The following is a 240-amino-acid chain: Ribosomal RNA small subunit methyltransferase G (240 aa).

Residues Gly78, Phe83, 129-130 (AE), and Arg147 each bind S-adenosyl-L-methionine. Residues 218-240 (RRQTSKKYPRKPGTPNKSPLLEN) are disordered.

The protein belongs to the methyltransferase superfamily. RNA methyltransferase RsmG family.

Its subcellular location is the cytoplasm. In terms of biological role, specifically methylates the N7 position of guanine in position 535 of 16S rRNA. The polypeptide is Ribosomal RNA small subunit methyltransferase G (Staphylococcus haemolyticus (strain JCSC1435)).